The chain runs to 337 residues: Inositol 2-dehydrogenase 1 (337 aa).

Belongs to the Gfo/Idh/MocA family. As to quaternary structure, homotetramer.

The catalysed reaction is myo-inositol + NAD(+) = scyllo-inosose + NADH + H(+). Involved in the oxidation of myo-inositol (MI) to 2-keto-myo-inositol (2KMI or 2-inosose). This chain is Inositol 2-dehydrogenase 1, found in Paenarthrobacter aurescens (strain TC1).